We begin with the raw amino-acid sequence, 86 residues long: Small ribosomal subunit protein bS20 (86 aa).

Belongs to the bacterial ribosomal protein bS20 family.

In terms of biological role, binds directly to 16S ribosomal RNA. In Bifidobacterium adolescentis (strain ATCC 15703 / DSM 20083 / NCTC 11814 / E194a), this protein is Small ribosomal subunit protein bS20.